We begin with the raw amino-acid sequence, 213 residues long: ATP phosphoribosyltransferase (213 aa).

The protein belongs to the ATP phosphoribosyltransferase family. Short subfamily. In terms of assembly, heteromultimer composed of HisG and HisZ subunits.

It localises to the cytoplasm. The enzyme catalyses 1-(5-phospho-beta-D-ribosyl)-ATP + diphosphate = 5-phospho-alpha-D-ribose 1-diphosphate + ATP. The protein operates within amino-acid biosynthesis; L-histidine biosynthesis; L-histidine from 5-phospho-alpha-D-ribose 1-diphosphate: step 1/9. Its function is as follows. Catalyzes the condensation of ATP and 5-phosphoribose 1-diphosphate to form N'-(5'-phosphoribosyl)-ATP (PR-ATP). Has a crucial role in the pathway because the rate of histidine biosynthesis seems to be controlled primarily by regulation of HisG enzymatic activity. This is ATP phosphoribosyltransferase (hisG) from Listeria monocytogenes serovar 1/2a (strain ATCC BAA-679 / EGD-e).